We begin with the raw amino-acid sequence, 489 residues long: Rhamnulokinase (489 aa).

Position 13-17 (13-17 (ASSGR)) interacts with ATP. Cysteine 68 and cysteine 222 are joined by a disulfide. Residues glycine 83 and 236–238 (HDT) each bind substrate. Residue aspartate 237 is the Proton acceptor of the active site. Threonine 259 is an ATP binding site. Asparagine 296 is a substrate binding site. An ATP-binding site is contributed by glutamine 304. A disulfide bridge connects residues cysteine 353 and cysteine 370. Glycine 402 contributes to the ATP binding site. Cysteine 413 and cysteine 417 are disulfide-bonded.

The protein belongs to the rhamnulokinase family. Monomer. Mg(2+) serves as cofactor.

It carries out the reaction L-rhamnulose + ATP = L-rhamnulose 1-phosphate + ADP + H(+). Its pathway is carbohydrate degradation; L-rhamnose degradation; glycerone phosphate from L-rhamnose: step 2/3. Functionally, involved in the catabolism of L-rhamnose (6-deoxy-L-mannose). Catalyzes the transfer of the gamma-phosphate group from ATP to the 1-hydroxyl group of L-rhamnulose to yield L-rhamnulose 1-phosphate. The sequence is that of Rhamnulokinase from Escherichia coli O139:H28 (strain E24377A / ETEC).